The following is a 472-amino-acid chain: Tryptophanase (472 aa).

At K270 the chain carries N6-(pyridoxal phosphate)lysine.

The protein belongs to the beta-eliminating lyase family. As to quaternary structure, homotetramer. It depends on pyridoxal 5'-phosphate as a cofactor.

It catalyses the reaction L-tryptophan + H2O = indole + pyruvate + NH4(+). It functions in the pathway amino-acid degradation; L-tryptophan degradation via pyruvate pathway; indole and pyruvate from L-tryptophan: step 1/1. The sequence is that of Tryptophanase (tnaA) from Haemophilus influenzae.